A 140-amino-acid chain; its full sequence is MLMRTWIPLVILVVVIVGGFTVHRIRGFFGSENRPSYSDTNLENSKPFNPKHLTYEIFGPPGTVADISYFDVNSEPQRVDGAVLPWSLHITTNDAAVMGNIVAQGNSDSIGCRITVDGKVRAERVSNEVNAYTYCLVKSA.

A helical membrane pass occupies residues 2-22 (LMRTWIPLVILVVVIVGGFTV).

It belongs to the MmpS family.

The protein localises to the cell membrane. This is Probable transport accessory protein MmpS4 (mmpS4) from Mycobacterium bovis (strain ATCC BAA-935 / AF2122/97).